Reading from the N-terminus, the 940-residue chain is UvrABC system protein A (940 aa).

31-38 contacts ATP; the sequence is GLSGSGKS. A C4-type zinc finger spans residues 252–279; sequence CPHCGYSMQELEPRLFSFNNPAGACGTC. 2 consecutive ABC transporter domains span residues 309–586 and 606–936; these read WDQK…PDSL and RDKN…RFLK. 639-646 is an ATP binding site; that stretch reads GVSGSGKS. The C4-type zinc finger occupies 739–765; the sequence is CEACQGDGVIKVEMHFLPDVYVPCDVC.

This sequence belongs to the ABC transporter superfamily. UvrA family. As to quaternary structure, forms a heterotetramer with UvrB during the search for lesions.

The protein resides in the cytoplasm. Its function is as follows. The UvrABC repair system catalyzes the recognition and processing of DNA lesions. UvrA is an ATPase and a DNA-binding protein. A damage recognition complex composed of 2 UvrA and 2 UvrB subunits scans DNA for abnormalities. When the presence of a lesion has been verified by UvrB, the UvrA molecules dissociate. This chain is UvrABC system protein A, found in Vibrio vulnificus (strain YJ016).